The sequence spans 265 residues: Bidirectional sugar transporter SWEET7b (265 aa).

Topologically, residues 1-9 (MVSPDLIRN) are extracellular. The chain crosses the membrane as a helical span at residues 10 to 30 (MVGIVGNIISFGLFLSPVPTF). One can recognise a MtN3/slv 1 domain in the interval 10–97 (MVGIVGNIIS…TIFFLFSDKK (88 aa)). Residues 31-45 (YRIIKNKDVQDFKAD) are Cytoplasmic-facing. The helical transmembrane segment at 46-66 (PYLATLLNCMLWVFYGLPIVH) threads the bilayer. Residues 67–69 (PNS) lie on the Extracellular side of the membrane. The chain crosses the membrane as a helical span at residues 70–90 (ILVVTINGIGLVIEAVYLTIF). Over 91–101 (FLFSDKKNKKK) the chain is Cytoplasmic. The chain crosses the membrane as a helical span at residues 102-122 (MGVVLATEALFMAAVVLGVLL). Over 123-131 (GAHTHQRRS) the chain is Extracellular. Residues 132–152 (LIVGILCVIFGTIMYSSPLTI) form a helical membrane-spanning segment. In terms of domain architecture, MtN3/slv 2 spans 133 to 215 (IVGILCVIFG…QLILYAIYYR (83 aa)). Residues 153-165 (MSQVVKTKSVEYM) are Cytoplasmic-facing. Residues 166 to 186 (PLLLSVVSFLNGLCWTSYALI) form a helical membrane-spanning segment. Over 187–189 (RLD) the chain is Extracellular. Residues 190 to 210 (IFITIPNGLGVLFALMQLILY) form a helical membrane-spanning segment. Residues 211-265 (AIYYRTIPKKQDKNLELPTVAPVAKDTSIVTPVSKDDDVDGGNASHVTINITIEL) lie on the Cytoplasmic side of the membrane.

This sequence belongs to the SWEET sugar transporter family. In terms of assembly, forms homooligomers and/or heterooligomers.

The protein localises to the cell membrane. Its function is as follows. Mediates both low-affinity uptake and efflux of sugar across the plasma membrane. The chain is Bidirectional sugar transporter SWEET7b (SWEET7B) from Oryza sativa subsp. japonica (Rice).